Here is a 182-residue protein sequence, read N- to C-terminus: Translation initiation factor IF-3 (182 aa).

This sequence belongs to the IF-3 family. As to quaternary structure, monomer.

It is found in the cytoplasm. In terms of biological role, IF-3 binds to the 30S ribosomal subunit and shifts the equilibrium between 70S ribosomes and their 50S and 30S subunits in favor of the free subunits, thus enhancing the availability of 30S subunits on which protein synthesis initiation begins. The chain is Translation initiation factor IF-3 from Thermosynechococcus vestitus (strain NIES-2133 / IAM M-273 / BP-1).